The primary structure comprises 361 residues: MALLEIKNVVKRFGDYTAVNDVSLSVEAGEFFTLPGPSGCGKTTLLRMLAGFEQPDAGQILLDGQDMSQVAPEKRPVHTVFQSYALFPHMTVRENIAFPLKMAKWDKRKIAAQVDELLEDVRLTQFGDRYPHEMSGGQRQRVAIARALVDRPRLLLLDEPLSALDAKLREEMQIELINLQKEVGITFVYVTHDQGEALALSHRIAVMSHGKVEQLDAPEKLYSYPKNRFVADFLGQCNVLEGTVKALHGDAMTVALKGCGDVKCQAVAGVKEGQQGWLALRPEKVKLDKELPELPDEAYFKGRVHDCLYLGDVTLYVVEVADGVLVEAMQPNNIPGVAKFFDDGDVVEIAWRFDAGSFLTE.

The 231-residue stretch at 4 to 234 (LEIKNVVKRF…PKNRFVADFL (231 aa)) folds into the ABC transporter domain. An ATP-binding site is contributed by 36 to 43 (GPSGCGKT).

It belongs to the ABC transporter superfamily. Spermidine/putrescine importer (TC 3.A.1.11.1) family. The complex is composed of two ATP-binding proteins (PotA), two transmembrane proteins (PotB and PotC) and a solute-binding protein (PotD).

Its subcellular location is the cell inner membrane. It carries out the reaction ATP + H2O + polyamine-[polyamine-binding protein]Side 1 = ADP + phosphate + polyamineSide 2 + [polyamine-binding protein]Side 1.. Part of the ABC transporter complex PotABCD involved in spermidine/putrescine import. Responsible for energy coupling to the transport system. The sequence is that of Spermidine/putrescine import ATP-binding protein PotA from Chromobacterium violaceum (strain ATCC 12472 / DSM 30191 / JCM 1249 / CCUG 213 / NBRC 12614 / NCIMB 9131 / NCTC 9757 / MK).